The sequence spans 373 residues: Tomoregulin-1 (373 aa).

The first 36 residues, 1–36 (MGAQAPLRLPAAPPLAVCGYTSVLLLFAFCLPGSGA), serve as a signal peptide directing secretion. The Extracellular portion of the chain corresponds to 37 to 323 (SNQPAGGGGD…VPSRQKLTHV (287 aa)). An N-linked (GlcNAc...) asparagine glycan is attached at asparagine 56. The Kazal-like 1 domain occupies 91–138 (ACQFQCHTNYIPVCGSNGDTYQNECFLRRAACKHQKDITVVARGPCYS). Disulfide bonds link cysteine 92–cysteine 122, cysteine 96–cysteine 115, and cysteine 104–cysteine 136. Asparagine 140 carries an N-linked (GlcNAc...) asparagine glycan. A disordered region spans residues 140 to 162 (NGSGSGEGEEEGSGAGAHRKHSK). Residues 182–230 (VCNIDCSGYSFNPVCASDGSSYNNPCFVREASCIRQEQIDIRHLGHCTD) form the Kazal-like 2 domain. Cystine bridges form between cysteine 183-cysteine 214, cysteine 187-cysteine 207, cysteine 196-cysteine 228, cysteine 268-cysteine 281, cysteine 276-cysteine 292, and cysteine 294-cysteine 303. One can recognise an EGF-like domain in the interval 264–304 (SHMPCPENLNGYCIHGKCEFIYSTQKASCRCESGYTGQHCE). The chain crosses the membrane as a helical span at residues 324 to 344 (LIAAIIGAVQIAIIVAIVMCI). At 345–373 (TRKCPKNNRGRRQKQNLGHFTSETSSRMV) the chain is on the cytoplasmic side. The interval 352–373 (NRGRRQKQNLGHFTSETSSRMV) is disordered. Residues 359–373 (QNLGHFTSETSSRMV) show a composition bias toward polar residues.

It belongs to the tomoregulin family. In terms of assembly, may interact with ST14.

Its subcellular location is the cell membrane. Functionally, neuron-specific restriction factor that prevents herpes simplex virus 1 (HHV-1) infection in the brain by blocking viral entry. Also able to restrict herpes simplex virus 2 (HHV-2) infection, although to a lesser extent. Acts by preventing the association between the viral glycoprotein D (gD) and its cell surface receptor NECTIN1, thereby inhibiting fusion of the virus and the cell membrane. Also able to prevent the association between the viral glycoprotein B (gB) and MYH9/NMMHC-IIA and MYH10/NMMHC-IIB receptors. This Rattus norvegicus (Rat) protein is Tomoregulin-1 (Tmeff1).